We begin with the raw amino-acid sequence, 69 residues long: Large ribosomal subunit protein bL31 (69 aa).

Positions 16, 18, 37, and 40 each coordinate Zn(2+).

Belongs to the bacterial ribosomal protein bL31 family. Type A subfamily. Part of the 50S ribosomal subunit. Zn(2+) is required as a cofactor.

Binds the 23S rRNA. The chain is Large ribosomal subunit protein bL31 from Syntrophotalea carbinolica (strain DSM 2380 / NBRC 103641 / GraBd1) (Pelobacter carbinolicus).